The following is a 249-amino-acid chain: Molybdate/tungstate transport system permease protein WtpB (249 aa).

Residues 1-10 (MDRRDYLAYA) lie on the Cytoplasmic side of the membrane. A helical transmembrane segment spans residues 11–31 (FAGLGAFLVAFIGLPLFMIFI). Topologically, residues 32–56 (KQAYDLEALQRTLVDPLVIESIRNS) are extracellular. The region spanning 53 to 239 (IRNSLFTATV…TISLAVFIFL (187 aa)) is the ABC transmembrane type-1 domain. A helical membrane pass occupies residues 57–77 (LFTATVSTLLGILFGVPLGYV). At 78–96 (LARKEFKGKNFVQALIDTP) the chain is on the cytoplasmic side. Residues 97-117 (IVIPHSVVGIMLLVTFSDAIL) traverse the membrane as a helical segment. Residue aspartate 118 is a topological domain, extracellular. The chain crosses the membrane as a helical span at residues 119–139 (NYKGIVAVMLFVSSPFIVNSA). Residues 140-179 (RDGFLSVDEKLEYVARTLGASGLRTFFSVTLPNAIHSIAS) are Cytoplasmic-facing. The chain crosses the membrane as a helical span at residues 180–200 (GAIMAWARAISEVGAILIVAY). Topologically, residues 201–223 (YPKTAQVLIMEYFNNYGLRASRP) are extracellular. Residues 224–244 (IAVILVTISLAVFIFLRWLVG) traverse the membrane as a helical segment. The Cytoplasmic portion of the chain corresponds to 245–249 (RGRNA).

It belongs to the binding-protein-dependent transport system permease family. As to quaternary structure, the complex is composed of two ATP-binding proteins (WtpC), two transmembrane proteins (WtpB) and a solute-binding protein (WtpA).

It localises to the cell membrane. Functionally, part of the ABC transporter complex WtpABC involved in molybdate/tungstate import. Probably responsible for the translocation of the substrate across the membrane. This is Molybdate/tungstate transport system permease protein WtpB from Pyrococcus furiosus (strain ATCC 43587 / DSM 3638 / JCM 8422 / Vc1).